The sequence spans 104 residues: MEKRYSQMTPHELNTEIALLSEKARKAEQHGIINELAVLERKITMAKAYLLNPEDYSPGETYRVENTEDEFTISYLNGVFAWGYRTSSPQQEEALPISVLQEKE.

Homodimer.

This is an uncharacterized protein from Bacillus subtilis (strain 168).